A 116-amino-acid chain; its full sequence is Methionine-R-sulfoxide reductase B1 (116 aa).

Residues 1-106 (MSFCSFFGGE…FSSSLKFVPK (106 aa)) enclose the MsrB domain. Zn(2+)-binding residues include Cys23, Cys26, Cys71, and Cys74. Sec95 (nucleophile) is an active-site residue. A non-standard amino acid (selenocysteine) is located at residue Sec95.

This sequence belongs to the MsrB Met sulfoxide reductase family. Zn(2+) serves as cofactor. In terms of processing, truncated MSRB1/SEPX1 proteins produced by failed UGA/Sec decoding are ubiquitinated by the CRL2(FEM1C) E3 ubiquitin-protein ligase complex.

It is found in the cytoplasm. The protein resides in the nucleus. Its subcellular location is the cytoskeleton. The catalysed reaction is L-methionyl-[protein] + [thioredoxin]-disulfide + H2O = L-methionyl-(R)-S-oxide-[protein] + [thioredoxin]-dithiol. It catalyses the reaction [thioredoxin]-disulfide + L-methionine + H2O = L-methionine (R)-S-oxide + [thioredoxin]-dithiol. In terms of biological role, methionine-sulfoxide reductase that specifically reduces methionine (R)-sulfoxide back to methionine. While in many cases, methionine oxidation is the result of random oxidation following oxidative stress, methionine oxidation is also a post-translational modification that takes place on specific residue. Acts as a regulator of actin assembly by reducing methionine (R)-sulfoxide mediated by MICALs (MICAL1, MICAL2 or MICAL3) on actin, thereby promoting filament repolymerization. Plays a role in innate immunity by reducing oxidized actin, leading to actin repolymerization in macrophages. This Mus musculus (Mouse) protein is Methionine-R-sulfoxide reductase B1 (Msrb1).